Consider the following 4134-residue polypeptide: DNA-dependent protein kinase catalytic subunit (4134 aa).

HEAT repeat units lie at residues 900 to 937 (VIYL…VAYM), 1000 to 1036 (QDTV…LKWS), and 1050 to 1085 (ANTK…YREF). 2 TPR repeats span residues 1265–1305 (YNTF…HDIH) and 1722–1755 (PMSS…SQSP). A Phosphoserine; by autocatalysis modification is found at serine 2055. The TPR 3 repeat unit spans residues 2207–2240 (DEILANRLLEFLMKNAFHQKRAVFRHNLEIIKTV). Residue threonine 2609 is modified to Phosphothreonine; by autocatalysis. A compositionally biased stretch (polar residues) spans 2611 to 2629 (ASQSTNRNSSQERSLSISG). The disordered stretch occupies residues 2611-2631 (ASQSTNRNSSQERSLSISGSV). At serine 2612 the chain carries Phosphoserine; by autocatalysis. A phosphothreonine; by autocatalysis mark is found at threonine 2638 and threonine 2647. Positions 2880–3545 (NVSTSCLASL…IYPFTISSES (666 aa)) constitute an FAT domain. The region spanning 3728-4059 (FDERIMVLES…VSYVKRKLTG (332 aa)) is the PI3K/PI4K catalytic domain. Residues 3734 to 3740 (VLESLRK) are G-loop. The segment at 3925 to 3933 (GIGDRHLSN) is catalytic loop. The segment at 3945–3970 (GIDFGHAFGSATQFLPVPELMPFRLT) is activation loop. The FATC domain maps to 4102–4134 (DRLSEETQVRCLIDQATDPNLLGRVWEGWEPWM).

It belongs to the PI3/PI4-kinase family. DNA-PK is a heterotrimer of PRKDC and the Ku dimer (composed of XRCC6/Ku70 and XRCC5/Ku86). Component of the core long-range non-homologous end joining (NHEJ) complex (also named DNA-PK complex) composed of PRKDC, LIG4, XRCC4, XRCC6/Ku70, XRCC5/Ku86 and NHEJ1/XLF. Additional component of the NHEJ complex includes PAXX. Following autophosphorylation, PRKDC dissociates from DNA. Post-translationally, autophosphorylated at two clusters, the T2609 cluster and the S2056 cluster. Autophosphorylated on Ser-2055, Thr-2609, Thr-2638 and Thr-2647. Ser-2055 and Thr-2609 are DNA damage-inducible phosphorylation sites (inducible with ionizing radiation, IR) dephosphorylated by PPP5C. Autophosphorylation induces a conformational change that leads to remodeling of the DNA-PK complex, requisite for efficient end processing and DNA repair. Autophosphorylation in trans within DNA-PK complexes loaded on DNA ends leads to the dissociation of PRKDC from DNA and the transition into the short-range NHEJ complex. Autophosphorylation of the T2609 cluster is required for hematopoietic development and protein synthesis in erythrocytes precursors.

The protein localises to the nucleus. It is found in the nucleolus. It catalyses the reaction L-seryl-[protein] + ATP = O-phospho-L-seryl-[protein] + ADP + H(+). It carries out the reaction L-threonyl-[protein] + ATP = O-phospho-L-threonyl-[protein] + ADP + H(+). Its function is as follows. Serine/threonine-protein kinase that acts as a molecular sensor for DNA damage. Involved in DNA nonhomologous end joining (NHEJ) required for double-strand break (DSB) repair and V(D)J recombination. Must be bound to DNA to express its catalytic properties. Promotes processing of hairpin DNA structures in V(D)J recombination by activation of the hairpin endonuclease artemis (DCLRE1C). Recruited by XRCC5 and XRCC6 to DNA ends and is required to (1) protect and align broken ends of DNA, thereby preventing their degradation, (2) and sequester the DSB for repair by NHEJ. Acts as a scaffold protein to aid the localization of DNA repair proteins to the site of damage. The assembly of the DNA-PK complex at DNA ends is also required for the NHEJ ligation step. Found at the ends of chromosomes, suggesting a further role in the maintenance of telomeric stability and the prevention of chromosomal end fusion. As part of the DNA-PK complex, involved in the early steps of ribosome assembly by promoting the processing of precursor rRNA into mature 18S rRNA in the small-subunit processome. Recognizes the substrate consensus sequence [ST]-Q. Phosphorylates 'Ser-139' of histone variant H2AX, thereby regulating DNA damage response mechanism. The polypeptide is DNA-dependent protein kinase catalytic subunit (PRKDC) (Gallus gallus (Chicken)).